Consider the following 242-residue polypeptide: Mannose-P-dolichol utilization defect 1 protein homolog (242 aa).

The 59-residue stretch at 37 to 95 folds into the PQ-loop 1 domain; the sequence is LSRGLGFAITLGSILLFVPQILKIQAARSAQGISAASQLLALVGAIGTASYSYRSGFVF. The next 7 helical transmembrane spans lie at 40–60, 68–88, 98–118, 120–140, 148–168, 180–200, and 207–227; these read GLGF…ILKI, GISA…ASYS, WGDS…IFLF, GQTM…YGVV, TLTA…LLQI, LSLI…FTSV, and LLIV…AQFF. The PQ-loop 2 domain occupies 152-202; the sequence is VQTAGIPIVVVSKLLQISQNYRAQSTGQLSLISVFLQFAGTLARVFTSVQD.

The protein belongs to the MPDU1 (TC 2.A.43.3) family.

The protein resides in the membrane. The polypeptide is Mannose-P-dolichol utilization defect 1 protein homolog (Caenorhabditis elegans).